The sequence spans 305 residues: Taste receptor type 2 member 136 (305 aa).

Residues 1-9 lie on the Extracellular side of the membrane; sequence MMSFLVSIA. A helical transmembrane segment spans residues 10–30; sequence SIAMLVKIVLGTFANVFIVLV. Residues 31–46 lie on the Cytoplasmic side of the membrane; it reads NFTDCIKKRKFLLADR. A helical transmembrane segment spans residues 47 to 67; sequence ILTVLAIFRFDLLWIILMNWS. Topologically, residues 68-69 are extracellular; it reads SS. Residues 70–90 traverse the membrane as a helical segment; it reads VFHVGLYFQVRFCICVVWIVT. At 91–99 the chain is on the cytoplasmic side; that stretch reads NHFNTWLAN. A helical transmembrane segment spans residues 100-120; it reads ILSILYLLKIDNFSNLIFLGL. Residues 121-127 are Extracellular-facing; sequence KGKIKCP. The helical transmembrane segment at 128 to 148 threads the bilayer; sequence YIVLLPCFVLLFPNLIMVTIC. Over 149 to 176 the chain is Cytoplasmic; sequence ETTQANGHQGNLTGKTKLTYFTNLIAMT. A helical transmembrane segment spans residues 177–197; that stretch reads FTLGSLVPFTTFMICFLLLIC. Over 198–223 the chain is Extracellular; the sequence is SLCKHLRTMRLYGKGSQGPSASTHIK. Residues 224-244 form a helical membrane-spanning segment; it reads VLQVLISFLLLFSMFILLLII. Over 245–305 the chain is Cytoplasmic; sequence SDYNYTKSLE…ARFWLKEKKP (61 aa).

It belongs to the G-protein coupled receptor T2R family.

The protein resides in the membrane. In terms of biological role, putative taste receptor which may play a role in the perception of bitterness. The sequence is that of Taste receptor type 2 member 136 (Tas2r136) from Mus musculus (Mouse).